A 101-amino-acid polypeptide reads, in one-letter code: Small ribosomal subunit protein uS14 (101 aa).

The protein belongs to the universal ribosomal protein uS14 family. In terms of assembly, part of the 30S ribosomal subunit. Contacts proteins S3 and S10.

In terms of biological role, binds 16S rRNA, required for the assembly of 30S particles and may also be responsible for determining the conformation of the 16S rRNA at the A site. The protein is Small ribosomal subunit protein uS14 of Burkholderia vietnamiensis (strain G4 / LMG 22486) (Burkholderia cepacia (strain R1808)).